Here is a 163-residue protein sequence, read N- to C-terminus: ADP-ribosylation factor-like protein 2-binding protein (163 aa).

The protein belongs to the ARL2BP family. Interacts with GTP bound ARL2 and ARL3; the complex ARL2-ARL2BP as well as ARL2BP alone, binds to SLC25A4/ANT1. Interaction with ARL2 may be required for cilia basal body localization. Interacts with STAT3; interaction is enhanced with ARL2. Found in a complex with ARL2BP, ARL2 and SLC25A6. Found in a complex with ARL2, ARL2BP and SLC25A4. Interacts with STAT2, STAT3 and STAT4.

It localises to the cytoplasm. The protein localises to the mitochondrion intermembrane space. It is found in the cytoskeleton. The protein resides in the microtubule organizing center. Its subcellular location is the centrosome. It localises to the nucleus. The protein localises to the spindle. It is found in the cilium basal body. Functionally, together with ARL2, plays a role in the nuclear translocation, retention and transcriptional activity of STAT3. May play a role as an effector of ARL2. The chain is ADP-ribosylation factor-like protein 2-binding protein (ARL2BP) from Pongo abelii (Sumatran orangutan).